The chain runs to 381 residues: Dual-specificity RNA methyltransferase RlmN (381 aa).

Glutamate 86 (proton acceptor) is an active-site residue. Residues 105–338 (RHARYTICVS…CTIRQSKGLD (234 aa)) enclose the Radical SAM core domain. An intrachain disulfide couples cysteine 112 to cysteine 343. The [4Fe-4S] cluster site is built by cysteine 119, cysteine 123, and cysteine 126. S-adenosyl-L-methionine-binding positions include 169–170 (GE), serine 201, 224–226 (SLH), and asparagine 300. Residue cysteine 343 is the S-methylcysteine intermediate of the active site. Residues 351–381 (ENPKFRANVSGNSAAKTEEKPTNDKTNVSKK) form a disordered region.

The protein belongs to the radical SAM superfamily. RlmN family. The cofactor is [4Fe-4S] cluster.

It is found in the cytoplasm. The enzyme catalyses adenosine(2503) in 23S rRNA + 2 reduced [2Fe-2S]-[ferredoxin] + 2 S-adenosyl-L-methionine = 2-methyladenosine(2503) in 23S rRNA + 5'-deoxyadenosine + L-methionine + 2 oxidized [2Fe-2S]-[ferredoxin] + S-adenosyl-L-homocysteine. It catalyses the reaction adenosine(37) in tRNA + 2 reduced [2Fe-2S]-[ferredoxin] + 2 S-adenosyl-L-methionine = 2-methyladenosine(37) in tRNA + 5'-deoxyadenosine + L-methionine + 2 oxidized [2Fe-2S]-[ferredoxin] + S-adenosyl-L-homocysteine. In terms of biological role, specifically methylates position 2 of adenine 2503 in 23S rRNA and position 2 of adenine 37 in tRNAs. m2A2503 modification seems to play a crucial role in the proofreading step occurring at the peptidyl transferase center and thus would serve to optimize ribosomal fidelity. The sequence is that of Dual-specificity RNA methyltransferase RlmN from Campylobacter concisus (strain 13826).